Reading from the N-terminus, the 932-residue chain is Progesterone receptor (932 aa).

The tract at residues 1-164 is AF3; mediates transcriptional activation; the sequence is MTELKAKGPR…PATQGVLSPL (164 aa). The disordered stretch occupies residues 1–254; the sequence is MTELKAKGPR…GGAAAGGAAA (254 aa). The interval 1–565 is modulating, Pro-Rich; that stretch reads MTELKAKGPR…YSFESLPQKI (565 aa). S20 carries the phosphoserine modification. An LXXL motif 1 motif is present at residues 55–59; sequence LDGLL. S81 bears the Phosphoserine mark. A compositionally biased stretch (low complexity) spans 88 to 103; it reads SRAEATRGAGGSSSSP. An LXXL motif 2 motif is present at residues 115-119; sequence LDTLL. S130 and S162 each carry phosphoserine. A mediates transcriptional transrepression region spans residues 165–304; sequence MSRSGGKAGD…LATTVMDFIH (140 aa). Residues 183–187 carry the Nuclear localization signal motif; that stretch reads KVLPQ. S190 and S213 each carry phosphoserine. Residues 220-231 show a composition bias toward acidic residues; that stretch reads EVEEEDGSESED. A compositionally biased stretch (low complexity) spans 232–254; that stretch reads SAGPLLKGKPRALGGAAAGGAAA. Phosphoserine; by MAPK1 is present on S293. A compositionally biased stretch (low complexity) spans 334-349; that stretch reads AASAFAPPRSSPSASS. The segment at 334 to 356 is disordered; the sequence is AASAFAPPRSSPSASSTPVAVGD. The residue at position 344 (S344) is a Phosphoserine; by MAPK. A Glycyl lysine isopeptide (Lys-Gly) (interchain with G-Cter in SUMO); alternate cross-link involves residue K387. A Glycyl lysine isopeptide (Lys-Gly) (interchain with G-Cter in ubiquitin); alternate cross-link involves residue K387. Disordered stretches follow at residues 414–451 and 468–499; these read PDFP…SSAS and PPQQ…STAA. Residues 417–432 show a composition bias toward pro residues; the sequence is PLGPPPPLPPRAPPSR. A compositionally biased stretch (low complexity) spans 433-451; sequence PGEAAVTAAPASASVSSAS. The interval 455-545 is AF1; mediates transcriptional activation; the sequence is STLECILYKA…VYPPYLNYLR (91 aa). A compositionally biased stretch (pro residues) spans 470 to 480; it reads QQGPFAPPPSK. K530 participates in a covalent cross-link: Glycyl lysine isopeptide (Lys-Gly) (interchain with G-Cter in SUMO). 2 consecutive NR C4-type zinc fingers follow at residues 566 to 586 and 602 to 626; these read CLIC…CGSC and CAGR…LRKC. Residues 566–638 constitute a DNA-binding region (nuclear receptor); that stretch reads CLICGDEASG…AGMVLGGRKF (73 aa). S675 is subject to Phosphoserine. The 235-residue stretch at 678–912 folds into the NR LBD domain; it reads QDIQLIPPLI…EFPEMMSEVI (235 aa). The segment at 686–932 is AF2; mediates transcriptional activation; sequence LINLLMSIEP…MVKPLLFHKK (247 aa). R765 contacts progesterone.

Belongs to the nuclear hormone receptor family. Interacts with SMARD1 and UNC45A. Interacts with CUEDC2; the interaction promotes ubiquitination, decreases sumoylation, and represses transcriptional activity. Interacts with PIAS3; the interaction promotes sumoylation of PR in a hormone-dependent manner, inhibits DNA-binding, and alters nuclear export. Interacts with SP1; the interaction requires ligand-induced phosphorylation on Ser-344 by ERK1/2-MAPK. Interacts with PRMT2. Interacts with NCOA2 and NCOA1. Interacts with KLF9. Interacts with GTF2B. Post-translationally, phosphorylated on multiple serine sites. Several of these sites are hormone-dependent. Phosphorylation on Ser-293 is highly hormone-dependent and modulates ubiquitination and sumoylation on Lys-387. Phosphorylation on Ser-102 and Ser-344 also requires induction by hormone. Basal phosphorylation on Ser-81, Ser-162 and Ser-190 is increased in response to progesterone and can be phosphorylated in vitro by the CDK2-A1 complex. Phosphorylation at Ser-162 and Ser-293, but not at Ser-190, is impaired during the G(2)/M phase of the cell cycle. Phosphorylation on Ser-344 by ERK1/2 MAPK is required for interaction with SP1. In terms of processing, sumoylation is hormone-dependent and represses transcriptional activity. Sumoylation on all three sites is enhanced by PIAS3. Desumoylated by SENP1. Sumoylation on Lys-387, the main site of sumoylation, is repressed by ubiquitination on the same site, and modulated by phosphorylation at Ser-293. Ubiquitination is hormone-dependent and represses sumoylation on the same site. Promoted by MAPK-mediated phosphorylation on Ser-293. Ubiquitinated by UBR5, leading to its degradation: UBR5 specifically recognizes and binds ligand-bound PGR when it is not associated with coactivators (NCOAs). In presence of NCOAs, the UBR5-degron is not accessible, preventing its ubiquitination and degradation. Post-translationally, palmitoylated by ZDHHC7 and ZDHHC21. Palmitoylation is required for plasma membrane targeting and for rapid intracellular signaling via ERK and AKT kinases and cAMP generation.

It is found in the nucleus. The protein localises to the cytoplasm. In terms of biological role, the steroid hormones and their receptors are involved in the regulation of eukaryotic gene expression and affect cellular proliferation and differentiation in target tissues. Transcriptional activator of several progesteron-dependent promoters in a variety of cell types. Involved in activation of SRC-dependent MAPK signaling on hormone stimulation. This chain is Progesterone receptor (PGR), found in Hylobates lar (Lar gibbon).